The following is a 198-amino-acid chain: UPF0301 protein Tfu_2389 (198 aa).

This sequence belongs to the UPF0301 (AlgH) family.

The polypeptide is UPF0301 protein Tfu_2389 (Thermobifida fusca (strain YX)).